The primary structure comprises 221 residues: 7-cyano-7-deazaguanine synthase (221 aa).

An ATP-binding site is contributed by Tyr9–Leu19. 4 residues coordinate Zn(2+): Cys185, Cys193, Cys196, and Cys199.

The protein belongs to the QueC family. The cofactor is Zn(2+).

It carries out the reaction 7-carboxy-7-deazaguanine + NH4(+) + ATP = 7-cyano-7-deazaguanine + ADP + phosphate + H2O + H(+). It participates in purine metabolism; 7-cyano-7-deazaguanine biosynthesis. In terms of biological role, catalyzes the ATP-dependent conversion of 7-carboxy-7-deazaguanine (CDG) to 7-cyano-7-deazaguanine (preQ(0)). The polypeptide is 7-cyano-7-deazaguanine synthase (Marinobacter nauticus (strain ATCC 700491 / DSM 11845 / VT8) (Marinobacter aquaeolei)).